The following is a 118-amino-acid chain: Eukaryotic translation initiation factor 4E-binding protein 1 (118 aa).

An N-acetylserine modification is found at serine 2. Residues 27 to 48 (VQLPPGDYSTTPGGTLFSTTPG) are disordered. Residues 34–48 (YSTTPGGTLFSTTPG) show a composition bias toward polar residues. Threonine 37 is modified (phosphothreonine; by MTOR). Threonine 41 bears the Phosphothreonine mark. Serine 44 carries the phosphoserine modification. At threonine 46 the chain carries Phosphothreonine; by MTOR. Position 50 is a phosphothreonine (threonine 50). The residue at position 54 (tyrosine 54) is a Phosphotyrosine. Positions 54-60 (YDRKFLM) match the YXXXXLphi motif motif. Lysine 57 participates in a covalent cross-link: Glycyl lysine isopeptide (Lys-Gly) (interchain with G-Cter in ubiquitin). A disordered region spans residues 64–118 (NSPVTKTPPRDLPTIPGVTSPTGDEPPTEARQNHLRSSPEDKPAGGEESQFEMDI). A Phosphoserine; by DYRK2, MAPK1, MAPK3 and MTOR modification is found at serine 65. The residue at position 70 (threonine 70) is a Phosphothreonine; by MTOR. Threonine 77 carries the post-translational modification Phosphothreonine. 2 positions are modified to phosphoserine: serine 83 and serine 100. Serine 101 carries the post-translational modification Phosphoserine; by DYRK2. Position 112 is a phosphoserine (serine 112). Residues 114-118 (FEMDI) carry the TOS motif motif.

It belongs to the eIF4E-binding protein family. Hypophosphorylated EIF4EBP1 competes with EIF4G1/EIF4G3 to interact with EIF4E; insulin stimulated MAP-kinase (MAPK1 and MAPK3) or mTORC1 phosphorylation of EIF4EBP1 causes dissociation of the complex allowing EIF4G1/EIF4G3 to bind and consequent initiation of translation. Interacts (via TOS motif) with RPTOR; promoting phosphorylation by mTORC1. Phosphorylated on serine and threonine residues in response to insulin, EGF and PDGF. Phosphorylation at Thr-37, Thr-46, Ser-65 and Thr-70, corresponding to the hyperphosphorylated form, is regulated by mTORC1 and abolishes binding to EIF4E. In terms of processing, ubiquitinated: when eIF4E levels are low, hypophosphorylated form is ubiquitinated by the BCR(KLHL25) complex, leading to its degradation and serving as a homeostatic mechanism to maintain translation and prevent eIF4E inhibition when eIF4E levels are low. Not ubiquitinated when hyperphosphorylated (at Thr-37, Thr-46, Ser-65 and Thr-70) or associated with eIF4E.

It is found in the cytoplasm. It localises to the nucleus. Functionally, repressor of translation initiation that regulates EIF4E activity by preventing its assembly into the eIF4F complex: hypophosphorylated form competes with EIF4G1/EIF4G3 and strongly binds to EIF4E, leading to repress translation. In contrast, hyperphosphorylated form dissociates from EIF4E, allowing interaction between EIF4G1/EIF4G3 and EIF4E, leading to initiation of translation. Mediates the regulation of protein translation by hormones, growth factors and other stimuli that signal through the MAP kinase and mTORC1 pathways. The sequence is that of Eukaryotic translation initiation factor 4E-binding protein 1 (EIF4EBP1) from Bos taurus (Bovine).